Reading from the N-terminus, the 274-residue chain is NH(3)-dependent NAD(+) synthetase (274 aa).

Residue 46–53 participates in ATP binding; it reads GISGGQDS. Position 52 (Asp52) interacts with Mg(2+). Deamido-NAD(+) is bound at residue Arg140. Residue Thr160 coordinates ATP. Glu165 contributes to the Mg(2+) binding site. Positions 173 and 180 each coordinate deamido-NAD(+). Residues Lys189 and Thr211 each contribute to the ATP site. 260–261 serves as a coordination point for deamido-NAD(+); it reads HK.

Belongs to the NAD synthetase family. As to quaternary structure, homodimer.

The catalysed reaction is deamido-NAD(+) + NH4(+) + ATP = AMP + diphosphate + NAD(+) + H(+). It participates in cofactor biosynthesis; NAD(+) biosynthesis; NAD(+) from deamido-NAD(+) (ammonia route): step 1/1. Catalyzes the ATP-dependent amidation of deamido-NAD to form NAD. Uses ammonia as a nitrogen source. This chain is NH(3)-dependent NAD(+) synthetase, found in Pectobacterium atrosepticum (strain SCRI 1043 / ATCC BAA-672) (Erwinia carotovora subsp. atroseptica).